The sequence spans 187 residues: Adenine phosphoribosyltransferase (187 aa).

It belongs to the purine/pyrimidine phosphoribosyltransferase family. Homodimer.

The protein resides in the cytoplasm. It catalyses the reaction AMP + diphosphate = 5-phospho-alpha-D-ribose 1-diphosphate + adenine. Its pathway is purine metabolism; AMP biosynthesis via salvage pathway; AMP from adenine: step 1/1. Catalyzes a salvage reaction resulting in the formation of AMP, that is energically less costly than de novo synthesis. The polypeptide is Adenine phosphoribosyltransferase (Burkholderia pseudomallei (strain 1106a)).